The primary structure comprises 833 residues: Transmembrane protease serine 7 (833 aa).

Topologically, residues Met-1–Lys-62 are cytoplasmic. Residues Lys-30–Gln-49 are disordered. Residues Pro-32–Gln-49 show a composition bias toward basic residues. Residues Ile-63–Leu-83 traverse the membrane as a helical; Signal-anchor for type II membrane protein segment. Over Tyr-84 to Val-829 the chain is Extracellular. Residues Asp-92–Arg-220 form the SEA domain. N-linked (GlcNAc...) asparagine glycosylation is present at Asn-196. Disulfide bonds link Cys-233/Cys-259, Cys-285/Cys-312, and Cys-355/Cys-386. 2 CUB domains span residues Cys-233 to Ile-350 and Cys-355 to Ser-471. N-linked (GlcNAc...) asparagine glycans are attached at residues Asn-405 and Asn-469. LDL-receptor class A domains follow at residues Pro-473 to Val-509 and Pro-548 to Gly-585. 7 cysteine pairs are disulfide-bonded: Cys-474-Cys-486, Cys-481-Cys-499, Cys-493-Cys-508, Cys-549-Cys-561, Cys-556-Cys-575, Cys-569-Cys-584, and Cys-621-Cys-637. One can recognise a Peptidase S1 domain in the interval Val-596–Pro-830. Residues His-636 and Asp-684 each act as charge relay system in the active site. 3 disulfides stabilise this stretch: Cys-720–Cys-786, Cys-752–Cys-765, and Cys-776–Cys-806. The Charge relay system role is filled by Ser-780.

It belongs to the peptidase S1 family. In terms of assembly, forms a heterodimer with SERPINA5. In terms of processing, N-glycosylated.

The protein resides in the cell membrane. In terms of biological role, serine protease which preferentially hydrolyzes peptides with Arg at the P1 position. The protein is Transmembrane protease serine 7 of Rattus norvegicus (Rat).